We begin with the raw amino-acid sequence, 302 residues long: 2-phosphoglycerate kinase (302 aa).

Residues 2 to 89 form the ATP-cone domain; that stretch reads IKVIERDGKV…FWRRFRKLKI (88 aa).

It belongs to the 2-phosphoglycerate kinase family. A divalent metal cation serves as cofactor.

It catalyses the reaction (2R)-2-phosphoglycerate + ATP = (2R)-2,3-bisphosphoglycerate + ADP + H(+). It participates in thermoadapter biosynthesis; cyclic 2,3-diphosphoglycerate biosynthesis; cyclic 2,3-diphosphoglycerate from 2-phospho-D-glycerate: step 1/2. In terms of biological role, catalyzes the phosphorylation of 2-phosphoglycerate to 2,3-diphosphoglycerate. Involved in the biosynthesis of cyclic 2,3-bisphosphoglycerate, a thermoprotectant. The sequence is that of 2-phosphoglycerate kinase from Pyrococcus furiosus (strain ATCC 43587 / DSM 3638 / JCM 8422 / Vc1).